The sequence spans 763 residues: Heat shock 70 kDa protein 16 (763 aa).

Disordered regions lie at residues 509 to 529 (ISEE…PSSG) and 701 to 763 (EKTT…MELD). The residue at position 528 (S528) is a Phosphoserine. Positions 701 to 714 (EKTTEQESLPKDAN) are enriched in basic and acidic residues.

Belongs to the heat shock protein 70 (TC 1.A.33) family. HSP110/SSE subfamily.

This chain is Heat shock 70 kDa protein 16 (HSP70-16), found in Arabidopsis thaliana (Mouse-ear cress).